Here is a 373-residue protein sequence, read N- to C-terminus: Histidinol-phosphate aminotransferase (373 aa).

K233 carries the post-translational modification N6-(pyridoxal phosphate)lysine.

It belongs to the class-II pyridoxal-phosphate-dependent aminotransferase family. Histidinol-phosphate aminotransferase subfamily. Homodimer. Pyridoxal 5'-phosphate serves as cofactor.

It catalyses the reaction L-histidinol phosphate + 2-oxoglutarate = 3-(imidazol-4-yl)-2-oxopropyl phosphate + L-glutamate. Its pathway is amino-acid biosynthesis; L-histidine biosynthesis; L-histidine from 5-phospho-alpha-D-ribose 1-diphosphate: step 7/9. The polypeptide is Histidinol-phosphate aminotransferase (Nitratidesulfovibrio vulgaris (strain DP4) (Desulfovibrio vulgaris)).